We begin with the raw amino-acid sequence, 295 residues long: MITIRIGTRPSRLAVRQAEIVASAIRHAGYEVEIVKYRSEGDSDLKSPLYSIGKTGVFVERLNSLILSGDIDAAVHSAKDIPYEIDRRLRISAVMPRGRFEDALVSENPLSKLPPGSVIGTSSLRRRYQILYQRKDVKVSNIRGNVDTRIEKMRSEGMAGIVMALAAIDRLELNLRYWPFDPEKFVPAPNQGIIAVVSEDGSKASEVLSSINDADTYDDMMAERSITQGLKLGCSTPVGILSRHTGKGMRILAQFFAMDGSDMMMFDQHVDGLDDVDGIVSYIRENLPEEYGYKL.

At Cys-234 the chain carries S-(dipyrrolylmethanemethyl)cysteine.

Belongs to the HMBS family. It depends on dipyrromethane as a cofactor.

It catalyses the reaction 4 porphobilinogen + H2O = hydroxymethylbilane + 4 NH4(+). It participates in porphyrin-containing compound metabolism; protoporphyrin-IX biosynthesis; coproporphyrinogen-III from 5-aminolevulinate: step 2/4. Functionally, tetrapolymerization of the monopyrrole PBG into the hydroxymethylbilane pre-uroporphyrinogen in several discrete steps. This Thermoplasma acidophilum (strain ATCC 25905 / DSM 1728 / JCM 9062 / NBRC 15155 / AMRC-C165) protein is Probable porphobilinogen deaminase (hemC).